A 514-amino-acid polypeptide reads, in one-letter code: Pleiotropic regulator 1 (514 aa).

Met1 is subject to N-acetylmethionine. Phosphoserine is present on Ser119. Residues 135–160 (KADANRTAPSGSEYRHPGASDRPQPT) form a disordered region. The residue at position 201 (Ser201) is a Phosphoserine. 7 WD repeats span residues 202 to 241 (GHLGWVRCIAVEPGNQWFVTGSADRTIKIWDLASGKLKLS), 244 to 283 (GHISTVRGVIVSTRSPYLFSCGEDKQVKCWDLEYNKVIRH), 286 to 325 (GHLSAVYGLDLHPTIDVLVTCSRDSTARIWDVRTKASVHT), 328 to 367 (GHTNAVATVRCQAAEPQIITGSHDTTIRLWDLVAGKTRVT), 370 to 410 (NHKK…QNLS), 411 to 449 (GHNAIINTLTVNSDGVLVSGADNGTMHLWDWRTGYNFQR), and 460 to 499 (DSESGIFACAFDQSESRLLTAEADKTIKVYREDDTATEET). Ser391 bears the Phosphoserine mark.

This sequence belongs to the WD repeat PRL1/PRL2 family. As to quaternary structure, identified in the spliceosome C complex. Component of the PRP19-CDC5L splicing complex composed of a core complex comprising a homotetramer of PRPF19, CDC5L, PLRG1 and BCAS2, and at least three less stably associated proteins CTNNBL1, CWC15 and HSPA8. Interacts (via its WD40 repeat domain) directly with CDC5L (via its C-terminal); the interaction is required for mRNA splicing but not for spliceosome assembly. Component of the minor spliceosome, which splices U12-type introns. Within this complex, interacts with CRIPT. Also interacts directly in the complex with BCAS2 and PRPF19. Interacts with USB1.

It localises to the nucleus. The protein resides in the nucleus speckle. Involved in pre-mRNA splicing as component of the spliceosome. Component of the PRP19-CDC5L complex that forms an integral part of the spliceosome and is required for activating pre-mRNA splicing. As a component of the minor spliceosome, involved in the splicing of U12-type introns in pre-mRNAs. The polypeptide is Pleiotropic regulator 1 (PLRG1) (Homo sapiens (Human)).